The sequence spans 421 residues: N-succinylarginine dihydrolase (421 aa).

Residues 19–28, Asn-105, and 132–133 contribute to the substrate site; these read AGLSLGNLAS and HR. The active site involves Glu-167. Arg-199 provides a ligand contact to substrate. The active site involves His-235. Substrate is bound by residues Asp-237 and Asn-346. Cys-352 functions as the Nucleophile in the catalytic mechanism.

Belongs to the succinylarginine dihydrolase family. As to quaternary structure, homodimer.

It carries out the reaction N(2)-succinyl-L-arginine + 2 H2O + 2 H(+) = N(2)-succinyl-L-ornithine + 2 NH4(+) + CO2. It functions in the pathway amino-acid degradation; L-arginine degradation via AST pathway; L-glutamate and succinate from L-arginine: step 2/5. Functionally, catalyzes the hydrolysis of N(2)-succinylarginine into N(2)-succinylornithine, ammonia and CO(2). This chain is N-succinylarginine dihydrolase, found in Novosphingobium aromaticivorans (strain ATCC 700278 / DSM 12444 / CCUG 56034 / CIP 105152 / NBRC 16084 / F199).